We begin with the raw amino-acid sequence, 421 residues long: 4-hydroxy-3-methylbut-2-en-1-yl diphosphate synthase (flavodoxin) (421 aa).

Cys-311, Cys-314, Cys-357, and Glu-364 together coordinate [4Fe-4S] cluster.

Belongs to the IspG family. [4Fe-4S] cluster serves as cofactor.

The enzyme catalyses (2E)-4-hydroxy-3-methylbut-2-enyl diphosphate + oxidized [flavodoxin] + H2O + 2 H(+) = 2-C-methyl-D-erythritol 2,4-cyclic diphosphate + reduced [flavodoxin]. It participates in isoprenoid biosynthesis; isopentenyl diphosphate biosynthesis via DXP pathway; isopentenyl diphosphate from 1-deoxy-D-xylulose 5-phosphate: step 5/6. Its function is as follows. Converts 2C-methyl-D-erythritol 2,4-cyclodiphosphate (ME-2,4cPP) into 1-hydroxy-2-methyl-2-(E)-butenyl 4-diphosphate. The polypeptide is 4-hydroxy-3-methylbut-2-en-1-yl diphosphate synthase (flavodoxin) (Xanthomonas axonopodis pv. citri (strain 306)).